A 293-amino-acid chain; its full sequence is Methylsterol monooxygenase 1 (293 aa).

The next 2 helical transmembrane spans lie at 55 to 75 (LIVHEALYFFFCLPGFLFQFI) and 100 to 120 (VLLFNHFCIQFPLICGTYYFT). Positions 145 to 274 (CAVIEDTWHY…FTWWDRIFGT (130 aa)) constitute a Fatty acid hydroxylase domain. The Histidine box-1 signature appears at 157 to 161 (HRLLH). The short motif at 170-174 (HKIHH) is the Histidine box-2 element. The helical transmembrane segment at 199 to 219 (FFIGIMLLCDHVILLWAWVTV) threads the bilayer. The Histidine box-3 motif lies at 249 to 255 (HHDFHHM).

Belongs to the sterol desaturase family. Requires Fe cation as cofactor. In terms of processing, ubiquitinated by MARCHF6, leading to proteasomal degradation.

It localises to the endoplasmic reticulum membrane. The enzyme catalyses 4,4-dimethyl-5alpha-cholest-7-en-3beta-ol + 6 Fe(II)-[cytochrome b5] + 3 O2 + 5 H(+) = 4alpha-carboxy-4beta-methyl-5alpha-cholest-7-ene-3beta-ol + 6 Fe(III)-[cytochrome b5] + 4 H2O. The catalysed reaction is 4,4-dimethyl-5alpha-cholesta-8,24-dien-3beta-ol + 6 Fe(II)-[cytochrome b5] + 3 O2 + 5 H(+) = 4beta-methylzymosterol-4alpha-carboxylate + 6 Fe(III)-[cytochrome b5] + 4 H2O. It carries out the reaction 4alpha-methylzymosterol + 6 Fe(II)-[cytochrome b5] + 3 O2 + 5 H(+) = 4alpha-carboxyzymosterol + 6 Fe(III)-[cytochrome b5] + 4 H2O. It catalyses the reaction 4alpha-methyl-5alpha-cholest-7-en-3beta-ol + 6 Fe(II)-[cytochrome b5] + 3 O2 + 5 H(+) = 4alpha-carboxy-5alpha-cholest-7-en-3beta-ol + 6 Fe(III)-[cytochrome b5] + 4 H2O. The enzyme catalyses 4,4-dimethyl-5alpha-cholest-8-en-3beta-ol + 6 Fe(II)-[cytochrome b5] + 3 O2 + 5 H(+) = 4alpha-carboxy-4beta-methyl-5alpha-cholest-8-en-3beta-ol + 6 Fe(III)-[cytochrome b5] + 4 H2O. The catalysed reaction is 4alpha-methyl-5alpha-cholest-8-en-3beta-ol + 6 Fe(II)-[cytochrome b5] + 3 O2 + 5 H(+) = 4alpha-carboxy-5alpha-cholest-8-ene-3beta-ol + 6 Fe(III)-[cytochrome b5] + 4 H2O. It participates in steroid biosynthesis; zymosterol biosynthesis; zymosterol from lanosterol: step 3/6. It functions in the pathway steroid biosynthesis; cholesterol biosynthesis. Functionally, catalyzes the three-step monooxygenation required for the demethylation of 4,4-dimethyl and 4alpha-methylsterols, which can be subsequently metabolized to cholesterol. This is Methylsterol monooxygenase 1 (MSMO1) from Sus scrofa (Pig).